A 376-amino-acid polypeptide reads, in one-letter code: Nuclear egress protein 1 (376 aa).

Ser19 is subject to Phosphoserine. Residues 22-57 form a disordered region; it reads RKRRQRELASKVASTVNGATSANNHGEPPSPADARP. A compositionally biased stretch (polar residues) spans 33-45; it reads VASTVNGATSANN. A CCCH-type zinc finger spans residues 106–211; sequence CLDISPYGNE…HVIFENSDVH (106 aa). The interval 316–376 is disordered; the sequence is VVSTNGCGPS…PLFLNSIRAP (61 aa). A compositionally biased stretch (polar residues) spans 317–332; the sequence is VSTNGCGPSSSSQSTP.

It belongs to the herpesviridae NEC1 protein family. As to quaternary structure, forms a heterohexameric complex with NEC2. Interacts with capsid vertex specific component 2/CVC2; this interaction directs the capsid to the host inner nuclear membrane to initiate budding. In terms of processing, phosphorylated at serine residues in the N-terminus. This phosphorylation regulates the localization within the inner nuclear membrane. Phosphorylation by viral kinase UL97 at Ser-19 plays an important role for correct viral nuclear egress complex (NEC) localization.

The protein localises to the host nucleus inner membrane. Plays an essential role in virion nuclear egress, the first step of virion release from infected cell. Within the host nucleus, NEC1 interacts with the newly formed capsid through the vertexes and directs it to the inner nuclear membrane by associating with NEC2. Induces the budding of the capsid at the inner nuclear membrane as well as its envelopment into the perinuclear space. There, the NEC1/NEC2 complex promotes the fusion of the enveloped capsid with the outer nuclear membrane and the subsequent release of the viral capsid into the cytoplasm where it will reach the secondary budding sites in the host Golgi or trans-Golgi network. This Homo sapiens (Human) protein is Nuclear egress protein 1.